A 323-amino-acid chain; its full sequence is MPSITTAKREYEERLVDCLTKYSCVLFVGMDNVRSQQVHDVGRALRAKAEFMMGKKTLQGKIVEKRAQAKDASPEAKHFNDQCEEYNLLSGNTGLIFTNNAVQEITSVLDAHRVKRAARVGAISPCDVIVAAGSTGMEPTQTSFFQALNIATKIAKGMVEIVTEKKVLSVGDKVDNSTATLLQKLNISPFYYQVNVLSVWDRGVLFTREDLMMTEDMVEKMLMEGLSNVAAMALGAGIPTSSTIGPMLVDAFKNLLAVSVATSYEFEEHNGKELREAAINGLLAGSCSAAAEPAAAAPAAPSAAAKEEPEESDEDDFGMGGLF.

Residues 296 to 323 form a disordered region; the sequence is AAPAAPSAAAKEEPEESDEDDFGMGGLF. Over residues 308 to 317 the composition is skewed to acidic residues; it reads EPEESDEDDF.

It belongs to the universal ribosomal protein uL10 family. P0 forms a pentameric complex by interaction with dimers of P1 and P2. Post-translationally, phosphorylated.

In terms of biological role, ribosomal protein P0 is the functional equivalent of E.coli protein L10. This is Large ribosomal subunit protein uL10 (LIPO-A) from Leishmania infantum.